The following is a 310-amino-acid chain: uncharacterized protein (310 aa).

The HTH lysR-type domain occupies 5-62 (FTEENLLAFTTAARFGSFSKAAEELGLTTSAISYTIKRMETGLDVVLFTRSTRSIELT). The H-T-H motif DNA-binding region spans 22-42 (FSKAAEELGLTTSAISYTIKR).

It belongs to the LysR transcriptional regulatory family.

This is an uncharacterized protein from Escherichia coli (strain K12).